The sequence spans 344 residues: Phenylalanine--tRNA ligase alpha subunit (344 aa).

Glu-256 serves as a coordination point for Mg(2+).

Belongs to the class-II aminoacyl-tRNA synthetase family. Phe-tRNA synthetase alpha subunit type 1 subfamily. As to quaternary structure, tetramer of two alpha and two beta subunits. The cofactor is Mg(2+).

The protein localises to the cytoplasm. It carries out the reaction tRNA(Phe) + L-phenylalanine + ATP = L-phenylalanyl-tRNA(Phe) + AMP + diphosphate + H(+). This Bacillus pumilus (strain SAFR-032) protein is Phenylalanine--tRNA ligase alpha subunit.